We begin with the raw amino-acid sequence, 199 residues long: Potassium-transporting ATPase KdpC subunit (199 aa).

The chain crosses the membrane as a helical span at residues proline 7–methionine 27. Residues histidine 67–proline 86 are disordered. Residues serine 71–threonine 84 show a composition bias toward polar residues.

Belongs to the KdpC family. As to quaternary structure, the system is composed of three essential subunits: KdpA, KdpB and KdpC.

The protein localises to the cell inner membrane. Part of the high-affinity ATP-driven potassium transport (or Kdp) system, which catalyzes the hydrolysis of ATP coupled with the electrogenic transport of potassium into the cytoplasm. This subunit acts as a catalytic chaperone that increases the ATP-binding affinity of the ATP-hydrolyzing subunit KdpB by the formation of a transient KdpB/KdpC/ATP ternary complex. The protein is Potassium-transporting ATPase KdpC subunit of Rhodopseudomonas palustris (strain BisB18).